A 1458-amino-acid polypeptide reads, in one-letter code: Anaphase-promoting complex subunit 1 (1458 aa).

The interval 186–210 (QSIKSSRNRRRESSFSREKNPDLTR) is disordered. The segment covering 196–210 (RESSFSREKNPDLTR) has biased composition (basic and acidic residues). PC repeat units lie at residues 873 to 895 (GLLL…KLLS), 959 to 982 (AAGF…SDLK), 1006 to 1024 (GAIM…LEVA), and 1099 to 1124 (GICF…INFL).

Belongs to the APC1 family. In terms of assembly, the APC/C is composed of at least 13 subunits: apc1, apc2, nuc2, apc4, apc5, cut9, apc8, apc10, apc11, hcn1, apc13, apc14 and apc15.

Component of the anaphase-promoting complex/cyclosome (APC/C), a cell cycle-regulated E3 ubiquitin-protein ligase complex that controls progression through mitosis and the G1 phase of the cell cycle. The APC/C is thought to confer substrate specificity and, in the presence of ubiquitin-conjugating E2 enzymes, it catalyzes the formation of protein-ubiquitin conjugates that are subsequently degraded by the 26S proteasome. Mutations to this protein prevent the exit from mitosis. This Schizosaccharomyces pombe (strain 972 / ATCC 24843) (Fission yeast) protein is Anaphase-promoting complex subunit 1 (cut4).